The primary structure comprises 105 residues: Large ribosomal subunit protein bL21 (105 aa).

This sequence belongs to the bacterial ribosomal protein bL21 family. Part of the 50S ribosomal subunit. Contacts protein L20.

Its function is as follows. This protein binds to 23S rRNA in the presence of protein L20. This Treponema pallidum (strain Nichols) protein is Large ribosomal subunit protein bL21.